Reading from the N-terminus, the 335-residue chain is Holliday junction branch migration complex subunit RuvB (335 aa).

Residues 4 to 184 (ADRLIQPTAL…FGIVQRLEFY (181 aa)) are large ATPase domain (RuvB-L). ATP contacts are provided by residues isoleucine 23, arginine 24, glycine 65, lysine 68, threonine 69, threonine 70, 131–133 (EDY), arginine 174, tyrosine 184, and arginine 221. Threonine 69 contributes to the Mg(2+) binding site. Residues 185 to 255 (NIKDLTQIVK…VASAALDMLD (71 aa)) are small ATPAse domain (RuvB-S). Positions 258–335 (KEGFDYMDRK…LHFGYDYEPN (78 aa)) are head domain (RuvB-H). 3 residues coordinate DNA: arginine 294, arginine 313, and arginine 318.

It belongs to the RuvB family. Homohexamer. Forms an RuvA(8)-RuvB(12)-Holliday junction (HJ) complex. HJ DNA is sandwiched between 2 RuvA tetramers; dsDNA enters through RuvA and exits via RuvB. An RuvB hexamer assembles on each DNA strand where it exits the tetramer. Each RuvB hexamer is contacted by two RuvA subunits (via domain III) on 2 adjacent RuvB subunits; this complex drives branch migration. In the full resolvosome a probable DNA-RuvA(4)-RuvB(12)-RuvC(2) complex forms which resolves the HJ.

It localises to the cytoplasm. The enzyme catalyses ATP + H2O = ADP + phosphate + H(+). In terms of biological role, the RuvA-RuvB-RuvC complex processes Holliday junction (HJ) DNA during genetic recombination and DNA repair, while the RuvA-RuvB complex plays an important role in the rescue of blocked DNA replication forks via replication fork reversal (RFR). RuvA specifically binds to HJ cruciform DNA, conferring on it an open structure. The RuvB hexamer acts as an ATP-dependent pump, pulling dsDNA into and through the RuvAB complex. RuvB forms 2 homohexamers on either side of HJ DNA bound by 1 or 2 RuvA tetramers; 4 subunits per hexamer contact DNA at a time. Coordinated motions by a converter formed by DNA-disengaged RuvB subunits stimulates ATP hydrolysis and nucleotide exchange. Immobilization of the converter enables RuvB to convert the ATP-contained energy into a lever motion, pulling 2 nucleotides of DNA out of the RuvA tetramer per ATP hydrolyzed, thus driving DNA branch migration. The RuvB motors rotate together with the DNA substrate, which together with the progressing nucleotide cycle form the mechanistic basis for DNA recombination by continuous HJ branch migration. Branch migration allows RuvC to scan DNA until it finds its consensus sequence, where it cleaves and resolves cruciform DNA. The chain is Holliday junction branch migration complex subunit RuvB from Pseudoalteromonas atlantica (strain T6c / ATCC BAA-1087).